The primary structure comprises 764 residues: 5-methyltetrahydropteroyltriglutamate--homocysteine methyltransferase (764 aa).

5-methyltetrahydropteroyltri-L-glutamate is bound by residues 16 to 19 and K112; that span reads RELK. Residues 431–433 and E484 contribute to the L-homocysteine site; that span reads IGS. L-methionine contacts are provided by residues 431–433 and E484; that span reads IGS. Residues 515-516 and W561 each bind 5-methyltetrahydropteroyltri-L-glutamate; that span reads RC. Residue D599 participates in L-homocysteine binding. D599 provides a ligand contact to L-methionine. Position 605 (E605) interacts with 5-methyltetrahydropteroyltri-L-glutamate. Zn(2+)-binding residues include H641, C643, and E665. Catalysis depends on H694, which acts as the Proton donor. Residue C726 coordinates Zn(2+).

The protein belongs to the vitamin-B12 independent methionine synthase family. Zn(2+) is required as a cofactor.

It catalyses the reaction 5-methyltetrahydropteroyltri-L-glutamate + L-homocysteine = tetrahydropteroyltri-L-glutamate + L-methionine. It participates in amino-acid biosynthesis; L-methionine biosynthesis via de novo pathway; L-methionine from L-homocysteine (MetE route): step 1/1. In terms of biological role, catalyzes the transfer of a methyl group from 5-methyltetrahydrofolate to homocysteine resulting in methionine formation. In Paraburkholderia xenovorans (strain LB400), this protein is 5-methyltetrahydropteroyltriglutamate--homocysteine methyltransferase.